Here is a 537-residue protein sequence, read N- to C-terminus: Cytoplasmic dynein 2 intermediate chain 2 (537 aa).

A Phosphoserine modification is found at Ser15. The segment at 80-93 is DYNLL2 binding; sequence RTHADAQVQTEAPE. Positions 107–132 are DYNLRB1 binding; the sequence is LRLEAFLRRVEAMVIRELNNNWQSHA. WD repeat units lie at residues 216 to 256, 265 to 309, 391 to 431, 434 to 474, and 481 to 521; these read EVPS…DPLL, THTD…QLRL, PHGG…PLTS, LSHK…QKPT, and QDGS…TEQG.

Belongs to the dynein light intermediate chain family. The cytoplasmic dynein 2 complex consists of two catalytic heavy chains (HCs) and a number of non-catalytic subunits presented by intermediate chains (ICs), light intermediate chains (LICs) and light chains (LCs). Among them, a heavy chain (DYNC2H1), two intermediate chains (DYNC2I2 and DYNC2I1), a light intermediate chain (DYNC2LI1), and a light chain (DYNLT2B) are unique to the cytoplasmic dynein complex 2, but a subset of the light chains are also shared by dynein-1 and dynein-2 complexes. Interacts with DYNC2I1; their C-terminal domains each bind a copy of the heavy chain, and their extended N-terminal regions are held together by an array of light chain dimers. Interacts with DYNLL2; this interaction is essential for dynein-2-mediated retrograde trafficking of ciliary proteins. Interacts with DYNLRB1; this interaction is essential for dynein-2-mediated retrograde trafficking of ciliary proteins. Interacts (via the WD domains) with MAP3K7 and TAB3. Interacts (via WD domains) with TAB2 (via C-terminus). Interacts (via WD domains) with TRAF6 (via TRAF-type domains). As to expression, expressed in brain, thymus, heart, lung, liver, spleen, kidney, testis and intestine.

The protein localises to the cytoplasm. It is found in the cytoskeleton. Its subcellular location is the cilium basal body. It localises to the cilium axoneme. The protein resides in the cell projection. The protein localises to the cilium. It is found in the microtubule organizing center. Its subcellular location is the centrosome. It localises to the filopodium. In terms of biological role, acts as one of several non-catalytic accessory components of the cytoplasmic dynein 2 complex (dynein-2 complex), a motor protein complex that drives the movement of cargos along microtubules within cilia and flagella in concert with the intraflagellar transport (IFT) system. DYNC2I2 plays a major role in retrograde ciliary protein trafficking and in ciliogenesis. Required also to maintain a functional transition zone. Acts as a negative regulator of the Toll-like and IL-1R receptor signaling pathways. Inhibits the MAP3K7-induced NF-kappa-B activation pathway. Inhibits MAP3K7 phosphorylation at 'Thr-184' and 'Thr-187' upon Il-1 beta stimulation. The sequence is that of Cytoplasmic dynein 2 intermediate chain 2 (Dync2i2) from Mus musculus (Mouse).